A 72-amino-acid chain; its full sequence is Translation initiation factor IF-1 (72 aa).

The S1-like domain maps to 1-72; the sequence is MAKEDTLEFP…TKGRINYRFK (72 aa).

It belongs to the IF-1 family. As to quaternary structure, component of the 30S ribosomal translation pre-initiation complex which assembles on the 30S ribosome in the order IF-2 and IF-3, IF-1 and N-formylmethionyl-tRNA(fMet); mRNA recruitment can occur at any time during PIC assembly.

Its subcellular location is the cytoplasm. In terms of biological role, one of the essential components for the initiation of protein synthesis. Stabilizes the binding of IF-2 and IF-3 on the 30S subunit to which N-formylmethionyl-tRNA(fMet) subsequently binds. Helps modulate mRNA selection, yielding the 30S pre-initiation complex (PIC). Upon addition of the 50S ribosomal subunit IF-1, IF-2 and IF-3 are released leaving the mature 70S translation initiation complex. In Ruegeria sp. (strain TM1040) (Silicibacter sp.), this protein is Translation initiation factor IF-1.